The primary structure comprises 218 residues: Ornithine decarboxylase antizyme 2 (218 aa).

Belongs to the ODC antizyme family. In terms of assembly, interacts with ODC1 and thereby sterically blocks ODC homodimerization. As to expression, expressed ubiquitously in 24 hours embryos, with highest levels in telencephalon, lens, retina, cerebellum and hindbrain primordia.

Functionally, ornithine decarboxylase (ODC) antizyme protein that negatively regulates ODC activity and intracellular polyamine biosynthesis and uptake in response to increased intracellular polyamine levels. Binds to ODC monomers, inhibiting the assembly of the functional ODC homodimers. Does not target the ODC monomers for degradation, which allows a protein synthesis-independent restoration of ODC activity. The polypeptide is Ornithine decarboxylase antizyme 2 (oaz1b) (Danio rerio (Zebrafish)).